The following is a 196-amino-acid chain: ATP-dependent Clp protease proteolytic subunit (196 aa).

The active-site Nucleophile is S101. H126 is a catalytic residue.

It belongs to the peptidase S14 family. Component of the chloroplastic Clp protease core complex.

Its subcellular location is the plastid. The protein resides in the chloroplast stroma. It carries out the reaction Hydrolysis of proteins to small peptides in the presence of ATP and magnesium. alpha-casein is the usual test substrate. In the absence of ATP, only oligopeptides shorter than five residues are hydrolyzed (such as succinyl-Leu-Tyr-|-NHMec, and Leu-Tyr-Leu-|-Tyr-Trp, in which cleavage of the -Tyr-|-Leu- and -Tyr-|-Trp bonds also occurs).. Cleaves peptides in various proteins in a process that requires ATP hydrolysis. Has a chymotrypsin-like activity. Plays a major role in the degradation of misfolded proteins. This chain is ATP-dependent Clp protease proteolytic subunit, found in Lobularia maritima (Sweet alyssum).